We begin with the raw amino-acid sequence, 84 residues long: uncharacterized protein (84 aa).

The protein belongs to the chlamydial CPn_0711/CT_665/TC_0036 family.

This is an uncharacterized protein from Chlamydia muridarum (strain MoPn / Nigg).